The primary structure comprises 340 residues: Complement decay-accelerating factor (340 aa).

4 Sushi domains span residues 1–55 (VPNA…FCNR), 56–119 (SCEV…FCKK), 120–181 (KSCP…ECRE), and 182–244 (IYCP…ECRG). An intrachain disulfide couples Cys-24 to Cys-53. Asn-54 carries an N-linked (GlcNAc...) asparagine glycan. 6 disulfide bridges follow: Cys-57-Cys-104, Cys-88-Cys-117, Cys-122-Cys-163, Cys-149-Cys-179, Cys-184-Cys-226, and Cys-212-Cys-242. Asn-107 carries N-linked (GlcNAc...) asparagine glycosylation. Residues 235 to 317 (WSGPPPECRG…SGTTSGTTSL (83 aa)) are disordered. The segment covering 246 to 268 (SLTSKVPPTVQKPTTVNVPTTEV) has biased composition (polar residues). Composition is skewed to low complexity over residues 269–287 (SPTSQKTTTKTTTPNAQAT) and 307–317 (GSGTTSGTTSL). A lipid anchor (GPI-anchor amidated serine) is attached at Ser-312. The propeptide at 313-340 (GTTSLLSGHKCFTLTGLLGTLVTMGLLT) is removed in mature form.

The protein belongs to the receptors of complement activation (RCA) family. Monomer (major form) and non-disulfide-linked, covalent homodimer (minor form). Interacts with ADGRE5. Post-translationally, the Ser/Thr-rich domain is heavily O-glycosylated.

The protein resides in the cell membrane. Its function is as follows. This protein recognizes C4b and C3b fragments that condense with cell-surface hydroxyl or amino groups when nascent C4b and C3b are locally generated during C4 and c3 activation. Interaction of daf with cell-associated C4b and C3b polypeptides interferes with their ability to catalyze the conversion of C2 and factor B to enzymatically active C2a and Bb and thereby prevents the formation of C4b2a and C3bBb, the amplification convertases of the complement cascade. Inhibits complement activation by destabilizing and preventing the formation of C3 and C5 convertases, which prevents complement damage. The chain is Complement decay-accelerating factor (CD55) from Pongo pygmaeus (Bornean orangutan).